Reading from the N-terminus, the 698-residue chain is MTIFRPHLRFLFKPHFLYFQSPAGQSSRPFSTSQILRTALDMPPPPVDTTQRLAKLRELMAQNKVDVYSMQFRYTIKAPLIITVVYSFFFFLLLALKLCLRKTAISQSTLLHVMGVETLIRITAAFISSFTGSAGCAIVSMSKAALSTDGRYFSQAAKQLDSNWTLLKRGVEGVPTWEEWTAEQAENGKVVGVDPSLITAGENLHYTPLTSVVVTNCSYVIADARKLSQTLKTTGGSLVGIDQNLIDAVWGNERPARPANQITVQPVERAGKPFEEKVEDLRKELAAKKRSAMVISTLDEIAWLFNLRGSDIPYNPVFFSYAIVTPSVAELYVDESKLSPEARKHLEGKVVLKPYDSIFQASKVLAESKASASSGSSGKFLLSNKASWSLSLALGGEQNVVEVRSPITDAKAIKNEVELEGFRKCHIRDGAALIEYFAWLENALIKEGAQLDEVDGADKLFEIRKKYDLFVGNSFDTISSTGANGATIHYKPEKSTCAVIDPKAMYLCDSGGQYLDGTTDTTRTLHFGEPTEFQKKAYALVLKGHISIDNAIFPKGTTGYAIDSFARQHLWKEGLDYLHGTGHGVGSFLYAEVPLSASNVLSNEPGYYEDGNFGIRLENLVICKEVQTAHKFGDKPFLGFESITLVPFCQKLLDASLLTEAERKWVNDYHARVWEKTSPFFEKDELTTAWLKRETQPI.

4 residues coordinate Mn(2+): Asp-509, Asp-520, Glu-604, and Glu-618.

This sequence belongs to the peptidase M24B family. Mn(2+) is required as a cofactor.

It carries out the reaction Release of any N-terminal amino acid, including proline, that is linked to proline, even from a dipeptide or tripeptide.. Its function is as follows. Catalyzes the removal of a penultimate prolyl residue from the N-termini of peptides. This chain is Probable Xaa-Pro aminopeptidase P (AMPP), found in Trichophyton verrucosum (strain HKI 0517).